The following is a 303-amino-acid chain: MTPQDLKNVMSSGLLSFPITDFHDNGDFNAKGYAERLEWLAPFGASALFAAGGTGEYFSLTASEYPQIIQTAVNTCRGKVPIIAGAGGPTRFAIECAQAAEKAGAHGILLMPHYMTEASQEGLAAHVEAVCKSVNFGVIIYNRGITRYTPETVARLCERNPNLVGFKDGVGDIEGMASMFLAMGDRLAYLGGLPTAEVYAAAYKALGTPVYSSAVFNFIPKTAMRFYEAVKNDDQATQHQLLKDFFMPYLKIRNRSAGYAVSIIKAGAKIVGHPAGPVRAPLADLQAEEIEMLAELIRKVEPV.

This sequence belongs to the DapA family.

The catalysed reaction is 5-dehydro-4-deoxy-D-glucarate + H(+) = 2,5-dioxopentanoate + CO2 + H2O. It participates in carbohydrate acid metabolism; D-glucarate degradation; 2,5-dioxopentanoate from D-glucarate: step 2/2. The chain is Probable 5-dehydro-4-deoxyglucarate dehydratase from Acidovorax ebreus (strain TPSY) (Diaphorobacter sp. (strain TPSY)).